A 722-amino-acid polypeptide reads, in one-letter code: Ribosomal RNA large subunit methyltransferase K/L (722 aa).

Residues isoleucine 43 to leucine 154 form the THUMP domain.

Belongs to the methyltransferase superfamily. RlmKL family.

The protein localises to the cytoplasm. The catalysed reaction is guanosine(2445) in 23S rRNA + S-adenosyl-L-methionine = N(2)-methylguanosine(2445) in 23S rRNA + S-adenosyl-L-homocysteine + H(+). It catalyses the reaction guanosine(2069) in 23S rRNA + S-adenosyl-L-methionine = N(2)-methylguanosine(2069) in 23S rRNA + S-adenosyl-L-homocysteine + H(+). Specifically methylates the guanine in position 2445 (m2G2445) and the guanine in position 2069 (m7G2069) of 23S rRNA. This Magnetococcus marinus (strain ATCC BAA-1437 / JCM 17883 / MC-1) protein is Ribosomal RNA large subunit methyltransferase K/L.